Consider the following 195-residue polypeptide: Imidazoleglycerol-phosphate dehydratase (195 aa).

Belongs to the imidazoleglycerol-phosphate dehydratase family.

The protein resides in the cytoplasm. The enzyme catalyses D-erythro-1-(imidazol-4-yl)glycerol 3-phosphate = 3-(imidazol-4-yl)-2-oxopropyl phosphate + H2O. It functions in the pathway amino-acid biosynthesis; L-histidine biosynthesis; L-histidine from 5-phospho-alpha-D-ribose 1-diphosphate: step 6/9. In Paracoccus denitrificans (strain Pd 1222), this protein is Imidazoleglycerol-phosphate dehydratase.